A 620-amino-acid chain; its full sequence is Chaperone protein HscA homolog (620 aa).

Belongs to the heat shock protein 70 family.

Chaperone involved in the maturation of iron-sulfur cluster-containing proteins. Has a low intrinsic ATPase activity which is markedly stimulated by HscB. The protein is Chaperone protein HscA homolog of Acinetobacter baylyi (strain ATCC 33305 / BD413 / ADP1).